The primary structure comprises 84 residues: Putative protein BCE-1 (84 aa).

In Homo sapiens (Human), this protein is Putative protein BCE-1 (BCE1).